The chain runs to 225 residues: ATP-dependent Clp protease proteolytic subunit (225 aa).

The active-site Nucleophile is S123. The active site involves H148.

This sequence belongs to the peptidase S14 family. In terms of assembly, fourteen ClpP subunits assemble into 2 heptameric rings which stack back to back to give a disk-like structure with a central cavity, resembling the structure of eukaryotic proteasomes.

The protein resides in the cytoplasm. It catalyses the reaction Hydrolysis of proteins to small peptides in the presence of ATP and magnesium. alpha-casein is the usual test substrate. In the absence of ATP, only oligopeptides shorter than five residues are hydrolyzed (such as succinyl-Leu-Tyr-|-NHMec, and Leu-Tyr-Leu-|-Tyr-Trp, in which cleavage of the -Tyr-|-Leu- and -Tyr-|-Trp bonds also occurs).. Cleaves peptides in various proteins in a process that requires ATP hydrolysis. Has a chymotrypsin-like activity. Plays a major role in the degradation of misfolded proteins. This Chlorobaculum tepidum (strain ATCC 49652 / DSM 12025 / NBRC 103806 / TLS) (Chlorobium tepidum) protein is ATP-dependent Clp protease proteolytic subunit.